The chain runs to 1537 residues: Dual oxidase (1537 aa).

The interval Met-1 to Lys-29 is disordered. The Extracellular portion of the chain corresponds to Met-1–Glu-626. Positions Met-63–Met-628 are peroxidase-like; mediates peroxidase activity. N-linked (GlcNAc...) asparagine glycosylation is found at Asn-133, Asn-233, Asn-577, and Asn-606. Residues Leu-627–Gly-647 form a helical membrane-spanning segment. The Cytoplasmic segment spans residues Tyr-648–Asn-1029. Position 826 is a phosphoserine (Ser-826). 3 consecutive EF-hand domains span residues Pro-855 to Gly-890, Lys-891 to Ile-926, and Gln-936 to Asp-971. Ca(2+) contacts are provided by Asp-868, Asp-870, Asp-872, Arg-874, Glu-879, Asp-904, Asp-906, Asn-908, and Glu-915. Residues Ile-1030–His-1050 traverse the membrane as a helical segment. Residues Tyr-1051 to Gly-1065 lie on the Extracellular side of the membrane. The helical transmembrane segment at Val-1066–Leu-1086 threads the bilayer. A Ferric oxidoreductase domain is found at Leu-1078–Ser-1218. Residues Leu-1087 to Lys-1116 lie on the Cytoplasmic side of the membrane. The residue at position 1105 (Tyr-1105) is a Phosphotyrosine. The chain crosses the membrane as a helical span at residues Ile-1117–Phe-1137. Residues Tyr-1138 to Gln-1171 lie on the Extracellular side of the membrane. The chain crosses the membrane as a helical span at residues Thr-1172–Ala-1192. Residues His-1193–Asn-1202 lie on the Cytoplasmic side of the membrane. A helical transmembrane segment spans residues Phe-1203–Leu-1223. At Ala-1224–Pro-1230 the chain is on the extracellular side. The helical transmembrane segment at Arg-1231 to Leu-1251 threads the bilayer. Residues Arg-1252–Gly-1537 are Cytoplasmic-facing. In terms of domain architecture, FAD-binding FR-type spans Thr-1253–Asp-1358.

The protein in the N-terminal section; belongs to the peroxidase family.

It is found in the membrane. The catalysed reaction is NADH + O2 + H(+) = H2O2 + NAD(+). It carries out the reaction NADPH + O2 + H(+) = H2O2 + NADP(+). Its activity is regulated as follows. Peroxidase activity is inhibited by aminotriazole and azide. Functionally, plays a role in innate immunity limiting microbial proliferation in the gut. Acts downstream of a hh-signaling pathway to induce the production of reactive oxygen species (ROS) in response to intestinal bacterial infection. May generate antimicrobial oxidative burst through its peroxidase-like domain. The protein is Dual oxidase (Duox) of Drosophila melanogaster (Fruit fly).